Reading from the N-terminus, the 224-residue chain is Heme response regulator HssR (224 aa).

A Response regulatory domain is found at 3 to 116 (NCLIVDDDKK…ELLFRIKAVL (114 aa)). At D52 the chain carries 4-aspartylphosphate. A DNA-binding region (ompR/PhoB-type) is located at residues 124–222 (DNELQLGNLI…VRGQGYRVDQ (99 aa)).

In terms of processing, phosphorylated by HssS.

The protein resides in the cytoplasm. Its function is as follows. Member of the two-component regulatory system HssS/HssR involved in intracellular heme homeostasis and tempering of staphylococcal virulence. Phosphorylated HssR binds to a direct repeat sequence within hrtAB promoter and activates the expression of hrtAB, an efflux pump, in response to extracellular heme, hemin, hemoglobin or blood. This Staphylococcus epidermidis (strain ATCC 12228 / FDA PCI 1200) protein is Heme response regulator HssR (hssR).